The following is a 164-amino-acid chain: Bacterial ferritin (164 aa).

The 147-residue stretch at 1 to 147 (MKGKKSVISR…QQLGLIARMG (147 aa)) folds into the Ferritin-like diiron domain. Glu-18, Glu-51, His-54, Glu-94, Glu-129, and His-132 together coordinate Fe cation.

It belongs to the bacterioferritin family. In terms of assembly, heterooligomer of 24 subunits, arranged as 12 dimers, that are packed together to form an approximately spherical molecule with a central cavity, in which large amounts of iron can be deposited.

The catalysed reaction is 4 Fe(2+) + O2 + 4 H(+) = 4 Fe(3+) + 2 H2O. It catalyses the reaction Fe(2+)(in) = Fe(2+)(out). Iron-storage protein, whose ferroxidase center binds Fe(2+), oxidizes it using dioxygen to Fe(3+), and participates in the subsequent Fe(3+) oxide mineral core formation within the central cavity of the BFR protein shell. This Paramagnetospirillum magnetotacticum (Aquaspirillum magnetotacticum) protein is Bacterial ferritin.